Here is a 426-residue protein sequence, read N- to C-terminus: 3-phosphoshikimate 1-carboxyvinyltransferase (426 aa).

3 residues coordinate 3-phosphoshikimate: K22, S23, and R27. K22 is a phosphoenolpyruvate binding site. Phosphoenolpyruvate is bound by residues G96 and R124. S170, S171, Q172, S198, D314, N337, and K341 together coordinate 3-phosphoshikimate. Q172 is a phosphoenolpyruvate binding site. The active-site Proton acceptor is the D314. Residues R345, R387, and K412 each coordinate phosphoenolpyruvate.

It belongs to the EPSP synthase family. Monomer.

Its subcellular location is the cytoplasm. The enzyme catalyses 3-phosphoshikimate + phosphoenolpyruvate = 5-O-(1-carboxyvinyl)-3-phosphoshikimate + phosphate. The protein operates within metabolic intermediate biosynthesis; chorismate biosynthesis; chorismate from D-erythrose 4-phosphate and phosphoenolpyruvate: step 6/7. In terms of biological role, catalyzes the transfer of the enolpyruvyl moiety of phosphoenolpyruvate (PEP) to the 5-hydroxyl of shikimate-3-phosphate (S3P) to produce enolpyruvyl shikimate-3-phosphate and inorganic phosphate. The protein is 3-phosphoshikimate 1-carboxyvinyltransferase of Shewanella loihica (strain ATCC BAA-1088 / PV-4).